An 897-amino-acid polypeptide reads, in one-letter code: Protein SAP1 (897 aa).

Disordered stretches follow at residues 112 to 144 (EEPA…PVFQ), 195 to 219 (PSKP…PPLK), 302 to 398 (QMSD…TKST), 413 to 438 (SKSN…PNSV), and 456 to 561 (KKVA…REEP). Over residues 120 to 137 (MPSSKTYTNHSSSFTRST) the composition is skewed to polar residues. Over residues 209–219 (NPIEHNDPPLK) the composition is skewed to basic and acidic residues. The span at 307-321 (SVTSSTSSNKSVSSS) shows a compositional bias: low complexity. Over residues 364–380 (LETSTTMDSSKIRNPQI) the composition is skewed to polar residues. Residues 468 to 478 (KKSHPILKSKT) show a composition bias toward basic residues. The span at 480–496 (KVPNSSSKKTSSHPSRP) shows a compositional bias: low complexity. The span at 497-523 (VSNSKPYSHGASQNKKPSKNQTTSMSK) shows a compositional bias: polar residues. Ser536 carries the phosphoserine modification. Residue 645–652 (GPPGTGKT) coordinates ATP.

The protein belongs to the AAA ATPase family. In terms of assembly, interacts with SPT2/SIN1.

This Saccharomyces cerevisiae (strain ATCC 204508 / S288c) (Baker's yeast) protein is Protein SAP1 (SAP1).